Consider the following 647-residue polypeptide: Type II methyltransferase M.FokI (647 aa).

Short sequence motifs (adenine-specific methylase) lie at residues 218–221 (DPPY) and 548–551 (DPPY).

It belongs to the N(4)/N(6)-methyltransferase family. Monomer.

The catalysed reaction is a 2'-deoxyadenosine in DNA + S-adenosyl-L-methionine = an N(6)-methyl-2'-deoxyadenosine in DNA + S-adenosyl-L-homocysteine + H(+). An alpha subtype methylase that recognizes the asymmetric double-stranded sequence 5'-GGATG-3', methylates A-3 of both strands, and protects the DNA from cleavage by the FokI endonuclease. The chain is Type II methyltransferase M.FokI from Planomicrobium okeanokoites (Planococcus okeanokoites).